The sequence spans 240 residues: UDP-2,3-diacylglucosamine hydrolase (240 aa).

Mn(2+) is bound by residues Asp-9, His-11, Asp-43, Asn-81, and His-116. 81 to 82 (NR) is a substrate binding site. Residues Asp-124, Ser-162, Lys-166, Lys-169, and His-197 each coordinate substrate. Mn(2+) contacts are provided by His-197 and His-199.

This sequence belongs to the LpxH family. Mn(2+) is required as a cofactor.

It localises to the cell inner membrane. The catalysed reaction is UDP-2-N,3-O-bis[(3R)-3-hydroxytetradecanoyl]-alpha-D-glucosamine + H2O = 2-N,3-O-bis[(3R)-3-hydroxytetradecanoyl]-alpha-D-glucosaminyl 1-phosphate + UMP + 2 H(+). The protein operates within glycolipid biosynthesis; lipid IV(A) biosynthesis; lipid IV(A) from (3R)-3-hydroxytetradecanoyl-[acyl-carrier-protein] and UDP-N-acetyl-alpha-D-glucosamine: step 4/6. Its function is as follows. Hydrolyzes the pyrophosphate bond of UDP-2,3-diacylglucosamine to yield 2,3-diacylglucosamine 1-phosphate (lipid X) and UMP by catalyzing the attack of water at the alpha-P atom. Involved in the biosynthesis of lipid A, a phosphorylated glycolipid that anchors the lipopolysaccharide to the outer membrane of the cell. This chain is UDP-2,3-diacylglucosamine hydrolase, found in Neisseria meningitidis serogroup A / serotype 4A (strain DSM 15465 / Z2491).